The primary structure comprises 488 residues: Retinoic acid receptor RXR-alpha (488 aa).

Positions 1–160 are modulating; the sequence is MSSAAMDTKH…GAMASFTKHI (160 aa). Lysine 134 is covalently cross-linked (Glycyl lysine isopeptide (Lys-Gly) (interchain with G-Cter in SUMO)). Positions 158–233 form a DNA-binding region, nuclear receptor; sequence KHICAICGDR…MGMKREAVQE (76 aa). Zn(2+) contacts are provided by cysteine 161, cysteine 164, cysteine 178, and cysteine 181. Residues 161 to 181 form an NR C4-type zinc finger; sequence CAICGDRSSGKHYGVYSCEGC. The interval 186-191 is nuclear localization signal; the sequence is KRTVRK. Zn(2+) contacts are provided by cysteine 197, cysteine 203, cysteine 213, and cysteine 216. The NR C4-type zinc finger occupies 197–216; it reads CRDSKDCMIDKRQRNRCQYC. The hinge stretch occupies residues 227–250; it reads KREAVQEERQRGKERNENEVESSN. Positions 232–244 are enriched in basic and acidic residues; that stretch reads QEERQRGKERNEN. The segment at 232–256 is disordered; that stretch reads QEERQRGKERNENEVESSNSANEDM. An NR LBD domain is found at 253–484; the sequence is NEDMPVEKIL…TFLMEMLEAP (232 aa). 9-cis-retinoate-binding residues include arginine 342 and alanine 353. 2 residues coordinate all-trans-retinoate: arginine 342 and alanine 353. The required for nuclear export stretch occupies residues 374–394; the sequence is RVLTELVSKMRDMQMDKTELG. The tract at residues 473–484 is AF-2; the sequence is IDTFLMEMLEAP.

The protein belongs to the nuclear hormone receptor family. NR2 subfamily. Homodimer. Heterodimer; with a rar molecule. Binds DNA preferentially as a rar/rxr heterodimer. Interacts with coactivator ncoa3 and with senp6. In terms of processing, sumoylated on Lys-134; which negatively regulates transcriptional activity. Desumoylated specifically by SENP6.

It is found in the nucleus. Functionally, receptor for retinoic acid that acts as a transcription factor. Forms homo- or heterodimers with retinoic acid receptors (rars) and binds to target response elements in response to their ligands, all-trans or 9-cis retinoic acid, to regulate gene expression in various biological processes. The rar/rxr heterodimers bind to the retinoic acid response elements (RARE) composed of tandem 5'-AGGTCA-3' sites known as DR1-DR5 to regulate transcription. The high affinity ligand for rxrs is 9-cis retinoic acid. In the absence of ligand, the rar/rxr heterodimers associate with a multiprotein complex containing transcription corepressors that induce histone deacetylation, chromatin condensation and transcriptional suppression. On ligand binding, the corepressors dissociate from the receptors and coactivators are recruited leading to transcriptional activation. The polypeptide is Retinoic acid receptor RXR-alpha (rxra) (Xenopus laevis (African clawed frog)).